The chain runs to 36 residues: Protein YibY (36 aa).

The protein is Protein YibY of Escherichia coli (strain K12).